Consider the following 365-residue polypeptide: Peptide chain release factor 2 (365 aa).

Position 252 is an N5-methylglutamine (Gln-252).

The protein belongs to the prokaryotic/mitochondrial release factor family. Post-translationally, methylated by PrmC. Methylation increases the termination efficiency of RF2.

It localises to the cytoplasm. Peptide chain release factor 2 directs the termination of translation in response to the peptide chain termination codons UGA and UAA. The chain is Peptide chain release factor 2 (prfB) from Haemophilus influenzae (strain ATCC 51907 / DSM 11121 / KW20 / Rd).